Consider the following 387-residue polypeptide: MKALHFGAGNIGRGFIGKLLADAGAQLTFADVNQPLLDELNKRKRYQVNVVGEQARVEEVKNVSAVNSGSPEVVALIAEADIVTTAVGPQILARIAATVAQGLITRHQQGNTRPLNIIACENMVRGTSQLKQHVFAALSEDEQIWVEQHVGFVDSAVDRIVPPSEAGSTDILAVTVETFSEWIVDGTQFKGQPPEIVGMELTDNLMAFVERKLFTLNTGHAITAYLGQLAGHQTIRDAILDPAVRQTVKGAMEESGAVLIKRYAFDPQKHAAYINKILSRFENPYLHDDVERVGRQPLRKLSAGDRLIKPLLGTLEYQLPHDSLVTGIAAAMSYRSEQDPQAQELVTLLAQLGPKAALAQISGLPADSEVVEQAVSVYNAMQQKLAH.

3-14 lines the NAD(+) pocket; it reads ALHFGAGNIGRG.

This sequence belongs to the mannitol dehydrogenase family.

It carries out the reaction D-mannitol 1-phosphate + NAD(+) = beta-D-fructose 6-phosphate + NADH + H(+). The protein is Mannitol-1-phosphate 5-dehydrogenase of Yersinia pestis bv. Antiqua (strain Antiqua).